The following is a 135-amino-acid chain: Holo-[acyl-carrier-protein] synthase (135 aa).

Mg(2+) contacts are provided by aspartate 8 and glutamate 58.

The protein belongs to the P-Pant transferase superfamily. AcpS family. The cofactor is Mg(2+).

The protein resides in the cytoplasm. The enzyme catalyses apo-[ACP] + CoA = holo-[ACP] + adenosine 3',5'-bisphosphate + H(+). In terms of biological role, transfers the 4'-phosphopantetheine moiety from coenzyme A to a Ser of acyl-carrier-protein. This Ligilactobacillus salivarius (strain UCC118) (Lactobacillus salivarius) protein is Holo-[acyl-carrier-protein] synthase.